The chain runs to 104 residues: L-rhamnose mutarotase (104 aa).

Residue Tyr-18 coordinates substrate. The active-site Proton donor is the His-22. Substrate-binding positions include Tyr-41 and 76-77 (WW).

It belongs to the rhamnose mutarotase family. In terms of assembly, homodimer.

The protein localises to the cytoplasm. The enzyme catalyses alpha-L-rhamnose = beta-L-rhamnose. It participates in carbohydrate metabolism; L-rhamnose metabolism. Involved in the anomeric conversion of L-rhamnose. The protein is L-rhamnose mutarotase of Sinorhizobium fredii (strain NBRC 101917 / NGR234).